The sequence spans 546 residues: Methionine--tRNA ligase (546 aa).

The short motif at 15-25 (PYANGPIHLGH) is the 'HIGH' region element. The Zn(2+) site is built by cysteine 146, cysteine 149, cysteine 159, and cysteine 162. Positions 332-336 (KMSKS) match the 'KMSKS' region motif. Residue lysine 335 coordinates ATP.

The protein belongs to the class-I aminoacyl-tRNA synthetase family. MetG type 1 subfamily. As to quaternary structure, monomer. Requires Zn(2+) as cofactor.

Its subcellular location is the cytoplasm. It catalyses the reaction tRNA(Met) + L-methionine + ATP = L-methionyl-tRNA(Met) + AMP + diphosphate. Functionally, is required not only for elongation of protein synthesis but also for the initiation of all mRNA translation through initiator tRNA(fMet) aminoacylation. The polypeptide is Methionine--tRNA ligase (Coxiella burnetii (strain RSA 331 / Henzerling II)).